Consider the following 82-residue polypeptide: Putative membrane protein insertion efficiency factor (82 aa).

Belongs to the UPF0161 family.

The protein resides in the cell inner membrane. In terms of biological role, could be involved in insertion of integral membrane proteins into the membrane. In Thermus thermophilus (strain ATCC BAA-163 / DSM 7039 / HB27), this protein is Putative membrane protein insertion efficiency factor.